Consider the following 619-residue polypeptide: Translation initiation factor IF-2 (619 aa).

A tr-type G domain is found at 120-289; that stretch reads PRPPIVTIMG…ILLLGEVEGY (170 aa). The tract at residues 129–136 is G1; sequence GHVDHGKT. 129 to 136 contacts GTP; it reads GHVDHGKT. Positions 154 to 158 are G2; that stretch reads GITQK. A G3 region spans residues 176-179; that stretch reads DTPG. Residues 176 to 180 and 230 to 233 contribute to the GTP site; these read DTPGH and NKMD. The interval 230-233 is G4; that stretch reads NKMD. A G5 region spans residues 266-268; that stretch reads SAL.

Belongs to the TRAFAC class translation factor GTPase superfamily. Classic translation factor GTPase family. IF-2 subfamily.

The protein localises to the cytoplasm. In terms of biological role, one of the essential components for the initiation of protein synthesis. Protects formylmethionyl-tRNA from spontaneous hydrolysis and promotes its binding to the 30S ribosomal subunits. Also involved in the hydrolysis of GTP during the formation of the 70S ribosomal complex. The protein is Translation initiation factor IF-2 (infB) of Mycoplasma genitalium (strain ATCC 33530 / DSM 19775 / NCTC 10195 / G37) (Mycoplasmoides genitalium).